Here is a 450-residue protein sequence, read N- to C-terminus: Glucose-6-phosphate isomerase (450 aa).

Glu-290 acts as the Proton donor in catalysis. Residues His-311 and Lys-425 contribute to the active site.

This sequence belongs to the GPI family.

It is found in the cytoplasm. It carries out the reaction alpha-D-glucose 6-phosphate = beta-D-fructose 6-phosphate. The protein operates within carbohydrate biosynthesis; gluconeogenesis. It participates in carbohydrate degradation; glycolysis; D-glyceraldehyde 3-phosphate and glycerone phosphate from D-glucose: step 2/4. In terms of biological role, catalyzes the reversible isomerization of glucose-6-phosphate to fructose-6-phosphate. This chain is Glucose-6-phosphate isomerase, found in Leuconostoc mesenteroides subsp. mesenteroides (strain ATCC 8293 / DSM 20343 / BCRC 11652 / CCM 1803 / JCM 6124 / NCDO 523 / NBRC 100496 / NCIMB 8023 / NCTC 12954 / NRRL B-1118 / 37Y).